The sequence spans 120 residues: NAD(P)H-quinone oxidoreductase subunit 3, chloroplastic (120 aa).

The next 3 helical transmembrane spans lie at 9–29 (IFWAFLIISSVIPILAFLISG), 64–84 (MFALVFVVFDVETVFLYPWAM), and 88–108 (VLGVSVFIEALIFVLILIVGS).

It belongs to the complex I subunit 3 family. In terms of assembly, NDH is composed of at least 16 different subunits, 5 of which are encoded in the nucleus.

The protein localises to the plastid. Its subcellular location is the chloroplast thylakoid membrane. It carries out the reaction a plastoquinone + NADH + (n+1) H(+)(in) = a plastoquinol + NAD(+) + n H(+)(out). The catalysed reaction is a plastoquinone + NADPH + (n+1) H(+)(in) = a plastoquinol + NADP(+) + n H(+)(out). NDH shuttles electrons from NAD(P)H:plastoquinone, via FMN and iron-sulfur (Fe-S) centers, to quinones in the photosynthetic chain and possibly in a chloroplast respiratory chain. The immediate electron acceptor for the enzyme in this species is believed to be plastoquinone. Couples the redox reaction to proton translocation, and thus conserves the redox energy in a proton gradient. The protein is NAD(P)H-quinone oxidoreductase subunit 3, chloroplastic of Buxus microphylla (Littleleaf boxwood).